We begin with the raw amino-acid sequence, 130 residues long: UPF0102 protein AHA_3896 (130 aa).

Belongs to the UPF0102 family.

The sequence is that of UPF0102 protein AHA_3896 from Aeromonas hydrophila subsp. hydrophila (strain ATCC 7966 / DSM 30187 / BCRC 13018 / CCUG 14551 / JCM 1027 / KCTC 2358 / NCIMB 9240 / NCTC 8049).